A 179-amino-acid chain; its full sequence is uncharacterized protein (179 aa).

This is an uncharacterized protein from Acanthamoeba polyphaga mimivirus (APMV).